The following is an 813-amino-acid chain: Microtubule-associated protein 6 (813 aa).

3 S-palmitoyl cysteine lipidation sites follow: Cys-5, Cys-10, and Cys-11. Disordered regions lie at residues 36-283 (ATEH…AAAD), 314-651 (VKPI…KDES), and 756-813 (PLKD…ESSP). Residues 41 to 50 (GAPPQPPPPQ) show a composition bias toward pro residues. Residues 51 to 62 (QQAQPALAPPSA) are compositionally biased toward low complexity. The span at 100–112 (GRSGPGPGLGSGS) shows a compositional bias: gly residues. Position 102 is a phosphoserine (Ser-102). The mn 1 stretch occupies residues 118–141 (DSVMRQDYRAWKVQRPEPSCRPRS). Positions 121-141 (MRQDYRAWKVQRPEPSCRPRS) are enriched in basic and acidic residues. The calmodulin-binding stretch occupies residues 126 to 140 (RAWKVQRPEPSCRPR). Tyr-143 is subject to Phosphotyrosine. The segment covering 149 to 173 (PFERETQYQKDFRAWPLPRRGDHPW) has biased composition (basic and acidic residues). Residues 153 to 176 (ETQYQKDFRAWPLPRRGDHPWIPK) are mn 2. Positions 162 to 176 (AWPLPRRGDHPWIPK) are calmodulin-binding. At Ser-187 the chain carries Phosphoserine. Calmodulin-binding regions lie at residues 189-203 (PILGAPKRRPQSQER), 306-320 (RAWTDIKPVKPIKAK), 357-371 (RRRIRSLYSEPFKEP), and 384-398 (PKKTSASHKPTRKAK). The tract at residues 298 to 321 (SSSYRNEFRAWTDIKPVKPIKAKP) is mn 3. Positions 367-376 (PFKEPPKVEK) are enriched in basic and acidic residues. Positions 383–398 (KPKKTSASHKPTRKAK) are enriched in basic residues. Positions 420–439 (KPDDKEQSKEMNNKLAEAKE) are enriched in basic and acidic residues. Over residues 443–454 (QPVSDSSKTQGP) the composition is skewed to polar residues. Positions 637-651 (KDQDPMVPEHPKDES) are enriched in basic and acidic residues. Ser-812 is subject to Phosphoserine.

It belongs to the STOP family. Interacts with calmodulin (via C-terminus); the interaction is dependent on Ca(2+). Interacts (via C-terminus) with TMEM106B (via N-terminus). Interacts with ZDHHC17 (via ANK repeats). Interacts with ZDHHC13 (via ANK repeats). Palmitoylated. Probably depalmitoylated by ABHD17A, ABHD17B and ABHD17C. During neuronal polarization, palmitoylation and depalmitoylation cycles regulate MAP6 shuttling between secretory vesicles and microtubules, and its polarized distribution in the axon. In terms of tissue distribution, expressed in brain (at protein level). Expressed in spinal cord. Isoform 2 expression is up-regulated in the prefrontal cortex (Brodmann's area 46) of patients with schizophrenia (postmortem brain study).

Its subcellular location is the cytoplasm. The protein localises to the cytoskeleton. It localises to the golgi apparatus. The protein resides in the cell projection. It is found in the axon. Its subcellular location is the dendrite. The protein localises to the cytoplasmic vesicle. It localises to the secretory vesicle membrane. Involved in microtubule stabilization in many cell types, including neuronal cells. Specifically has microtubule cold stabilizing activity. Involved in dendrite morphogenesis and maintenance by regulating lysosomal trafficking via its interaction with TMEM106B. Regulates KIF5A-mediated axonal cargo transport. Regulates axonal growth during neuron polarization. This Homo sapiens (Human) protein is Microtubule-associated protein 6 (MAP6).